We begin with the raw amino-acid sequence, 371 residues long: Chaperone protein DnaJ (371 aa).

Positions 5-69 constitute a J domain; the sequence is DYYEVLGLSK…QKRAQYDQFG (65 aa). The segment at 133–215 adopts a CR-type zinc-finger fold; it reads GKELNVEIPV…CHGSSKVRKR (83 aa). Zn(2+) contacts are provided by Cys146, Cys149, Cys163, Cys166, Cys189, Cys192, Cys203, and Cys206. CXXCXGXG motif repeat units follow at residues 146-153, 163-170, 189-196, and 203-210; these read CDTCKGSG, CKHCSGSG, CGHCSGTG, and CTTCHGSS.

This sequence belongs to the DnaJ family. In terms of assembly, homodimer. Zn(2+) is required as a cofactor.

It is found in the cytoplasm. Its function is as follows. Participates actively in the response to hyperosmotic and heat shock by preventing the aggregation of stress-denatured proteins and by disaggregating proteins, also in an autonomous, DnaK-independent fashion. Unfolded proteins bind initially to DnaJ; upon interaction with the DnaJ-bound protein, DnaK hydrolyzes its bound ATP, resulting in the formation of a stable complex. GrpE releases ADP from DnaK; ATP binding to DnaK triggers the release of the substrate protein, thus completing the reaction cycle. Several rounds of ATP-dependent interactions between DnaJ, DnaK and GrpE are required for fully efficient folding. Also involved, together with DnaK and GrpE, in the DNA replication of plasmids through activation of initiation proteins. This Bacillus cereus (strain ATCC 14579 / DSM 31 / CCUG 7414 / JCM 2152 / NBRC 15305 / NCIMB 9373 / NCTC 2599 / NRRL B-3711) protein is Chaperone protein DnaJ.